Here is a 255-residue protein sequence, read N- to C-terminus: MASRGLDLWLDEHVWKRKQEIGVKGENLLLPDLWLDFLQLSPIFQRKLAAVIACVRRLRTQATVYPEEDMCMAWARFCDPSDIKVVILGQDPYHGGQANGLAFSVAYGFPVPPSLRNIYAELHRSLPEFSPPDHGCLDAWASQGVLLLNTILTVQKGKPGSHADIGWAWFTDHVISLLSERLKACVFMLWGAKAGDKASLINSKKHLVLTSQHPSPLAQNSTRKSAQQKFLGNNHFVLANNFLREKGLGEIDWRL.

The Proton acceptor role is filled by Asp-91.

It belongs to the uracil-DNA glycosylase (UDG) superfamily. UNG family.

The protein resides in the host nucleus. The enzyme catalyses Hydrolyzes single-stranded DNA or mismatched double-stranded DNA and polynucleotides, releasing free uracil.. Functionally, excises uracil residues from the DNA which can arise as a result of misincorporation of dUMP residues by DNA polymerase or deamination of cytosines. Therefore may reduce deleterious uracil incorporation into the viral genome, particularly in terminally differentiated cells which lack DNA repair enzymes. The sequence is that of Uracil-DNA glycosylase (UNG) from Epstein-Barr virus (strain B95-8) (HHV-4).